The chain runs to 294 residues: Kynurenine formamidase (294 aa).

Residues 1–14 (MSRWKDMNKDELER) show a composition bias toward basic and acidic residues. The tract at residues 1–20 (MSRWKDMNKDELERQFSPSQ) is disordered. Residues 84–88 (HGGYW) carry the HGGXW motif. S153 acts as the Nucleophile in catalysis. Residues D236 and H269 contribute to the active site.

The protein belongs to the kynurenine formamidase family. Homodimer.

The protein localises to the cytoplasm. Its subcellular location is the cytosol. It is found in the nucleus. The enzyme catalyses N-formyl-L-kynurenine + H2O = L-kynurenine + formate + H(+). It participates in amino-acid degradation; L-tryptophan degradation via kynurenine pathway; L-kynurenine from L-tryptophan: step 2/2. Catalyzes the hydrolysis of N-formyl-L-kynurenine to L-kynurenine, the second step in the kynurenine pathway of tryptophan degradation. Kynurenine may be further oxidized to nicotinic acid, NAD(H) and NADP(H). Required for elimination of toxic metabolites. The sequence is that of Kynurenine formamidase (afmid) from Salmo salar (Atlantic salmon).